Consider the following 729-residue polypeptide: Bromo and FHA domain-containing protein DDB_G0267958 (729 aa).

Low complexity predominate over residues 46–79; that stretch reads LPIPNTSNTNPPMNQSSSPTTTTTTPTTTTTPTT. Residues 46–83 are disordered; it reads LPIPNTSNTNPPMNQSSSPTTTTTTPTTTTTPTTAEPA. Positions 112 to 167 constitute an FHA domain; that stretch reads LIIGSDTELADIQVVRPGIYPKHVEIIYDKEKKKFYLNPLIDPKDSDNVRLNFVPF. 3 stretches are compositionally biased toward low complexity: residues 208 to 221, 229 to 275, and 283 to 306; these read IPSNTPTCITNTPI, PPSS…ATKT, and PTKTTTTTTVTTSKPTVKPTAVKK. 2 disordered regions span residues 208–361 and 403–442; these read IPSN…MSCK and SRRPTAPVTPTKPTSTKKVTTPKKATVVKPPKESKVPKVP. Positions 310-341 are enriched in acidic residues; it reads DDDYGDDYNEEEDDDDEEEEEEEEEEEEEEEV. Positions 315–352 form a coiled coil; sequence DDYNEEEDDDDEEEEEEEEEEEEEEEVESKQIKVVNSK. Residues 406–431 show a composition bias toward low complexity; the sequence is PTAPVTPTKPTSTKKVTTPKKATVVK. Residues 498-617 form the Bromo domain; that stretch reads SNEKKEILKC…IELYKALSNS (120 aa). A coiled-coil region spans residues 659–718; the sequence is SKNKEQTVPQEEDEEEEEEEEEEEEEEEEGEEGKEDEEEEEKEEEEGEENEEEEDVEIDD. Residues 659–729 form a disordered region; it reads SKNKEQTVPQ…EIDQESDDDQ (71 aa). Residues 668 to 729 show a composition bias toward acidic residues; it reads QEEDEEEEEE…EIDQESDDDQ (62 aa).

The protein is Bromo and FHA domain-containing protein DDB_G0267958 of Dictyostelium discoideum (Social amoeba).